The following is a 189-amino-acid chain: Segregation and condensation protein B (189 aa).

It belongs to the ScpB family. Homodimer. Homodimerization may be required to stabilize the binding of ScpA to the Smc head domains. Component of a cohesin-like complex composed of ScpA, ScpB and the Smc homodimer, in which ScpA and ScpB bind to the head domain of Smc. The presence of the three proteins is required for the association of the complex with DNA.

Its subcellular location is the cytoplasm. Functionally, participates in chromosomal partition during cell division. May act via the formation of a condensin-like complex containing Smc and ScpA that pull DNA away from mid-cell into both cell halves. In Streptococcus mitis, this protein is Segregation and condensation protein B.